Here is a 149-residue protein sequence, read N- to C-terminus: MEKIIAENRKAYHDYHILEKYEAGIALKGTEVKSIRLGRVNLRDSFARIENGELWLYNMHISPYEQGNRFNHEPKRPRKLLMHKREIMRLFGKTREKGLTLVPLKLYFKGNYAKIELGLAKGKKIYDKREEMAKRDAAREIEKALRARY.

Belongs to the SmpB family.

The protein localises to the cytoplasm. Its function is as follows. Required for rescue of stalled ribosomes mediated by trans-translation. Binds to transfer-messenger RNA (tmRNA), required for stable association of tmRNA with ribosomes. tmRNA and SmpB together mimic tRNA shape, replacing the anticodon stem-loop with SmpB. tmRNA is encoded by the ssrA gene; the 2 termini fold to resemble tRNA(Ala) and it encodes a 'tag peptide', a short internal open reading frame. During trans-translation Ala-aminoacylated tmRNA acts like a tRNA, entering the A-site of stalled ribosomes, displacing the stalled mRNA. The ribosome then switches to translate the ORF on the tmRNA; the nascent peptide is terminated with the 'tag peptide' encoded by the tmRNA and targeted for degradation. The ribosome is freed to recommence translation, which seems to be the essential function of trans-translation. This chain is SsrA-binding protein, found in Carboxydothermus hydrogenoformans (strain ATCC BAA-161 / DSM 6008 / Z-2901).